Reading from the N-terminus, the 1677-residue chain is Zinc finger protein 831 (1677 aa).

A compositionally biased stretch (pro residues) spans 1 to 26 (MEVPEPTCPAPPARDQPAPTPGPPGA). Residues 1 to 43 (MEVPEPTCPAPPARDQPAPTPGPPGAPGGQASPHLTLGPVLLP) are disordered. 2 consecutive C2H2-type zinc fingers follow at residues 144 to 166 (YLCP…IRSH) and 172 to 196 (FPCA…TQTH). Disordered stretches follow at residues 193-250 (TQTH…SPGA), 270-398 (GSAF…AGLE), 516-557 (WLEP…PSGH), 663-931 (EAAG…VLSA), 950-1062 (TPLP…TCEA), 1100-1119 (NWEL…SGPL), 1137-1176 (LTRP…PFPS), 1216-1243 (LRDE…GPAQ), 1510-1597 (SAES…GQYG), and 1620-1677 (LITR…VIEI). Basic and acidic residues-rich tracts occupy residues 216-232 (EGDK…RGES) and 325-341 (KPWD…KCES). A compositionally biased stretch (gly residues) spans 376–385 (EGGPGPGPGV). Residues 391-423 (GAREAGLELEKKRLEERIAQLISHNQAVVDDAQ) adopt a coiled-coil conformation. Basic and acidic residues-rich tracts occupy residues 517–526 (LEPREPRDPW), 674–684 (QDRRTPVHEDI), 707–727 (PTKH…RVEE), and 813–834 (SGED…HSWK). Composition is skewed to low complexity over residues 880 to 894 (LESS…SVAL) and 905 to 919 (PLHP…HPSL). Positions 1153 to 1170 (SSHSGTSRSHSTRSPHST) are enriched in low complexity. A compositionally biased stretch (polar residues) spans 1518–1531 (QTAGRTLTSSSPDS). The span at 1649 to 1662 (RSLEGMRKQTRVEF) shows a compositional bias: basic and acidic residues.

The sequence is that of Zinc finger protein 831 (ZNF831) from Homo sapiens (Human).